Consider the following 283-residue polypeptide: Pantothenate synthetase (283 aa).

Residue 30 to 37 (MGNLHNGH) participates in ATP binding. Residue histidine 37 is the Proton donor of the active site. Glutamine 61 serves as a coordination point for (R)-pantoate. Position 61 (glutamine 61) interacts with beta-alanine. 149–152 (GEKD) serves as a coordination point for ATP. Glutamine 155 lines the (R)-pantoate pocket. 186–189 (LSSR) serves as a coordination point for ATP.

It belongs to the pantothenate synthetase family. In terms of assembly, homodimer.

It is found in the cytoplasm. The catalysed reaction is (R)-pantoate + beta-alanine + ATP = (R)-pantothenate + AMP + diphosphate + H(+). The protein operates within cofactor biosynthesis; (R)-pantothenate biosynthesis; (R)-pantothenate from (R)-pantoate and beta-alanine: step 1/1. Catalyzes the condensation of pantoate with beta-alanine in an ATP-dependent reaction via a pantoyl-adenylate intermediate. This chain is Pantothenate synthetase, found in Shigella flexneri serotype 5b (strain 8401).